Here is a 108-residue protein sequence, read N- to C-terminus: Nucleoid-associated protein Bpet3552 (108 aa).

This sequence belongs to the YbaB/EbfC family. In terms of assembly, homodimer.

It is found in the cytoplasm. The protein resides in the nucleoid. Functionally, binds to DNA and alters its conformation. May be involved in regulation of gene expression, nucleoid organization and DNA protection. The polypeptide is Nucleoid-associated protein Bpet3552 (Bordetella petrii (strain ATCC BAA-461 / DSM 12804 / CCUG 43448)).